Consider the following 264-residue polypeptide: Acyl-[acyl-carrier-protein]--UDP-N-acetylglucosamine O-acyltransferase (264 aa).

The protein belongs to the transferase hexapeptide repeat family. LpxA subfamily. Homotrimer.

The protein localises to the cytoplasm. The catalysed reaction is a (3R)-hydroxyacyl-[ACP] + UDP-N-acetyl-alpha-D-glucosamine = a UDP-3-O-[(3R)-3-hydroxyacyl]-N-acetyl-alpha-D-glucosamine + holo-[ACP]. It participates in glycolipid biosynthesis; lipid IV(A) biosynthesis; lipid IV(A) from (3R)-3-hydroxytetradecanoyl-[acyl-carrier-protein] and UDP-N-acetyl-alpha-D-glucosamine: step 1/6. Involved in the biosynthesis of lipid A, a phosphorylated glycolipid that anchors the lipopolysaccharide to the outer membrane of the cell. This chain is Acyl-[acyl-carrier-protein]--UDP-N-acetylglucosamine O-acyltransferase, found in Rickettsia peacockii (strain Rustic).